A 273-amino-acid chain; its full sequence is Chaperone protein PsaB (273 aa).

The N-terminal stretch at 1-31 is a signal peptide; it reads MKNLFFSAYKKVFSYITSIVIFMVSLPYAYS. Residues C128 and C163 are joined by a disulfide bond.

Belongs to the periplasmic pilus chaperone family.

The protein localises to the periplasm. Functionally, required for the biogenesis of the pH 6 antigen. The polypeptide is Chaperone protein PsaB (psaB) (Yersinia pestis).